The sequence spans 486 residues: Zinc metalloproteinase-disintegrin VMP-II (486 aa).

An N-terminal signal peptide occupies residues 1-20 (MIQVLLVTICLAVFPYQGSS). A propeptide spanning residues 21-190 (IILESGNVND…KASQSNLPPE (170 aa)) is cleaved from the precursor. Gln-191 carries the pyrrolidone carboxylic acid modification. A Peptidase M12B domain is found at 197–394 (RYIELVVVAD…HYTTCLYNEP (198 aa)). Residues Glu-200 and Asp-284 each contribute to the Ca(2+) site. Intrachain disulfides connect Cys-308–Cys-389, Cys-348–Cys-372, and Cys-350–Cys-355. Zn(2+) is bound at residue His-333. Residue Glu-334 is part of the active site. 2 residues coordinate Zn(2+): His-337 and His-343. Residues Cys-389 and Asn-392 each coordinate Ca(2+). The Disintegrin domain occupies 402 to 486 (PPVCGNYYTE…AECPNKGYYG (85 aa)). 7 disulfide bridges follow: Cys-405/Cys-424, Cys-416/Cys-434, Cys-418/Cys-429, Cys-428/Cys-451, Cys-442/Cys-448, Cys-447/Cys-472, and Cys-460/Cys-479. The short motif at 464-466 (RGD) is the Cell attachment site element.

This sequence belongs to the venom metalloproteinase (M12B) family. P-II subfamily. P-IIb sub-subfamily. As to quaternary structure, monomer. The cofactor is Zn(2+). In terms of tissue distribution, expressed by the venom gland.

The protein resides in the secreted. Snake venom zinc metalloproteinase that inhibits ADP-induced platelet aggregation (probably by binding integrin alpha-IIb/beta-3 (ITGA2B/ITGB3)) and degrades fibrinogen. This Crotalus atrox (Western diamondback rattlesnake) protein is Zinc metalloproteinase-disintegrin VMP-II.